A 424-amino-acid chain; its full sequence is D-inositol 3-phosphate glycosyltransferase (424 aa).

Residue His16 participates in 1D-myo-inositol 3-phosphate binding. Residues 22–23 (QP) and Gly30 each bind UDP-N-acetyl-alpha-D-glucosamine. Residues 27–32 (DAGGMN), Lys85, Tyr118, Thr142, and Arg162 contribute to the 1D-myo-inositol 3-phosphate site. Arg240 and Lys245 together coordinate UDP-N-acetyl-alpha-D-glucosamine. 3 residues coordinate Mg(2+): Met313, Arg314, and Ala316. 2 residues coordinate UDP-N-acetyl-alpha-D-glucosamine: Glu326 and Glu334. A Mg(2+)-binding site is contributed by Thr340.

Belongs to the glycosyltransferase group 1 family. MshA subfamily. Homodimer.

It carries out the reaction 1D-myo-inositol 3-phosphate + UDP-N-acetyl-alpha-D-glucosamine = 1D-myo-inositol 2-acetamido-2-deoxy-alpha-D-glucopyranoside 3-phosphate + UDP + H(+). Its function is as follows. Catalyzes the transfer of a N-acetyl-glucosamine moiety to 1D-myo-inositol 3-phosphate to produce 1D-myo-inositol 2-acetamido-2-deoxy-glucopyranoside 3-phosphate in the mycothiol biosynthesis pathway. This is D-inositol 3-phosphate glycosyltransferase from Jonesia denitrificans (strain ATCC 14870 / DSM 20603 / BCRC 15368 / CIP 55.134 / JCM 11481 / NBRC 15587 / NCTC 10816 / Prevot 55134) (Listeria denitrificans).